The sequence spans 233 residues: Orotidine 5'-phosphate decarboxylase (233 aa).

Residues aspartate 10, lysine 32, 60–69, threonine 115, arginine 176, glutamine 185, glycine 205, and arginine 206 contribute to the substrate site; that span reads DLKLHDIPAT. Lysine 62 acts as the Proton donor in catalysis.

It belongs to the OMP decarboxylase family. Type 1 subfamily. Homodimer.

The enzyme catalyses orotidine 5'-phosphate + H(+) = UMP + CO2. It functions in the pathway pyrimidine metabolism; UMP biosynthesis via de novo pathway; UMP from orotate: step 2/2. In terms of biological role, catalyzes the decarboxylation of orotidine 5'-monophosphate (OMP) to uridine 5'-monophosphate (UMP). This is Orotidine 5'-phosphate decarboxylase from Thermobifida fusca (strain YX).